Here is a 73-residue protein sequence, read N- to C-terminus: Translation initiation factor IF-1 (73 aa).

The S1-like domain occupies 1-72 (MAKDDVIEVE…TKGRITYRFI (72 aa)).

This sequence belongs to the IF-1 family. Component of the 30S ribosomal translation pre-initiation complex which assembles on the 30S ribosome in the order IF-2 and IF-3, IF-1 and N-formylmethionyl-tRNA(fMet); mRNA recruitment can occur at any time during PIC assembly.

The protein resides in the cytoplasm. Functionally, one of the essential components for the initiation of protein synthesis. Stabilizes the binding of IF-2 and IF-3 on the 30S subunit to which N-formylmethionyl-tRNA(fMet) subsequently binds. Helps modulate mRNA selection, yielding the 30S pre-initiation complex (PIC). Upon addition of the 50S ribosomal subunit IF-1, IF-2 and IF-3 are released leaving the mature 70S translation initiation complex. This Lactobacillus acidophilus (strain ATCC 700396 / NCK56 / N2 / NCFM) protein is Translation initiation factor IF-1.